A 485-amino-acid polypeptide reads, in one-letter code: D-alanine--D-alanyl carrier protein ligase (485 aa).

144–145 (TS) contacts ATP. Asp-189 lines the D-alanine pocket. Residue 284-289 (NTYGPT) participates in ATP binding. Residue Val-293 participates in D-alanine binding. 2 residues coordinate ATP: Asp-365 and Lys-473. Residue Lys-473 coordinates D-alanine.

It belongs to the ATP-dependent AMP-binding enzyme family. DltA subfamily.

Its subcellular location is the cytoplasm. It carries out the reaction holo-[D-alanyl-carrier protein] + D-alanine + ATP = D-alanyl-[D-alanyl-carrier protein] + AMP + diphosphate. The protein operates within cell wall biogenesis; lipoteichoic acid biosynthesis. Catalyzes the first step in the D-alanylation of lipoteichoic acid (LTA), the activation of D-alanine and its transfer onto the D-alanyl carrier protein (Dcp) DltC. In an ATP-dependent two-step reaction, forms a high energy D-alanyl-AMP intermediate, followed by transfer of the D-alanyl residue as a thiol ester to the phosphopantheinyl prosthetic group of the Dcp. D-alanylation of LTA plays an important role in modulating the properties of the cell wall in Gram-positive bacteria, influencing the net charge of the cell wall. The chain is D-alanine--D-alanyl carrier protein ligase from Staphylococcus aureus (strain USA300).